The sequence spans 235 residues: MDSPTILTPRDWPSHPAYVHPDYRSSVKRGPTRPMIPLKERLRDQYAPVYGAEDLGPLDHDLTKNAVKNGEPLGERIVVTGRVLDEGGKPVRNTLVEVWQANAAGRYVHKVDQHDAPLDPNFLGAGRCMTDAEGRYRFLTIKPGAYPWGNHPNAWRPNHIHFSLFGDYFGSRLVTQMYFPGDPLLAYDPIFQGTPEAARDRLISRFSLDTTEEGHALGYEFDIVLRGRDATPMER.

Residues tyrosine 107, tyrosine 146, histidine 159, and histidine 161 each contribute to the Fe cation site.

Belongs to the intradiol ring-cleavage dioxygenase family. In terms of assembly, the enzyme is an oligomer of 12 copies of the alpha and beta chains. Fe(3+) is required as a cofactor.

It catalyses the reaction 3,4-dihydroxybenzoate + O2 = 3-carboxy-cis,cis-muconate + 2 H(+). Its pathway is aromatic compound metabolism; beta-ketoadipate pathway; 3-carboxy-cis,cis-muconate from 3,4-dihydroxybenzoate: step 1/1. Plays an essential role in the utilization of numerous aromatic and hydroaromatic compounds via the beta-ketoadipate pathway. This Burkholderia cepacia (Pseudomonas cepacia) protein is Protocatechuate 3,4-dioxygenase beta chain (pcaH).